Reading from the N-terminus, the 683-residue chain is DNA ligase (683 aa).

NAD(+)-binding positions include Asp42 to Asp46, Ser91 to Leu92, and Glu122. The N6-AMP-lysine intermediate role is filled by Lys124. NAD(+) contacts are provided by Arg145, Glu182, Lys299, and Lys323. Cys417, Cys420, Cys435, and Cys441 together coordinate Zn(2+). The BRCT domain occupies Ala602–Thr683.

It belongs to the NAD-dependent DNA ligase family. LigA subfamily. It depends on Mg(2+) as a cofactor. Mn(2+) is required as a cofactor.

It catalyses the reaction NAD(+) + (deoxyribonucleotide)n-3'-hydroxyl + 5'-phospho-(deoxyribonucleotide)m = (deoxyribonucleotide)n+m + AMP + beta-nicotinamide D-nucleotide.. Its function is as follows. DNA ligase that catalyzes the formation of phosphodiester linkages between 5'-phosphoryl and 3'-hydroxyl groups in double-stranded DNA using NAD as a coenzyme and as the energy source for the reaction. It is essential for DNA replication and repair of damaged DNA. The sequence is that of DNA ligase from Paraburkholderia phymatum (strain DSM 17167 / CIP 108236 / LMG 21445 / STM815) (Burkholderia phymatum).